We begin with the raw amino-acid sequence, 446 residues long: Phosphoglucosamine mutase (446 aa).

Catalysis depends on S101, which acts as the Phosphoserine intermediate. S101, D240, D242, and D244 together coordinate Mg(2+). S101 is subject to Phosphoserine.

The protein belongs to the phosphohexose mutase family. Requires Mg(2+) as cofactor. In terms of processing, activated by phosphorylation.

The enzyme catalyses alpha-D-glucosamine 1-phosphate = D-glucosamine 6-phosphate. In terms of biological role, catalyzes the conversion of glucosamine-6-phosphate to glucosamine-1-phosphate. This chain is Phosphoglucosamine mutase, found in Pseudomonas entomophila (strain L48).